The chain runs to 451 residues: Phosphoglucosamine mutase (451 aa).

Residue Ser101 is the Phosphoserine intermediate of the active site. Residues Ser101, Asp240, Asp242, and Asp244 each contribute to the Mg(2+) site. A Phosphoserine modification is found at Ser101.

This sequence belongs to the phosphohexose mutase family. The cofactor is Mg(2+). Post-translationally, activated by phosphorylation.

It catalyses the reaction alpha-D-glucosamine 1-phosphate = D-glucosamine 6-phosphate. Its function is as follows. Catalyzes the conversion of glucosamine-6-phosphate to glucosamine-1-phosphate. This Nitrosococcus oceani (strain ATCC 19707 / BCRC 17464 / JCM 30415 / NCIMB 11848 / C-107) protein is Phosphoglucosamine mutase.